Here is a 547-residue protein sequence, read N- to C-terminus: Eukaryotic translation initiation factor 3 subunit D (547 aa).

2 disordered regions span residues 1 to 22 (MANF…PSTS) and 114 to 159 (SVRG…TRDS). Positions 126 to 148 (GRGGQRGGFSTRGGRGGARGGYG) are enriched in gly residues. The RNA gate stretch occupies residues 284-298 (PLDYITVNENAADPP).

The protein belongs to the eIF-3 subunit D family. As to quaternary structure, component of the eukaryotic translation initiation factor 3 (eIF-3) complex.

The protein localises to the cytoplasm. Its function is as follows. mRNA cap-binding component of the eukaryotic translation initiation factor 3 (eIF-3) complex, which is involved in protein synthesis of a specialized repertoire of mRNAs and, together with other initiation factors, stimulates binding of mRNA and methionyl-tRNAi to the 40S ribosome. The eIF-3 complex specifically targets and initiates translation of a subset of mRNAs involved in cell proliferation. In the eIF-3 complex, eif3d specifically recognizes and binds the 7-methylguanosine cap of a subset of mRNAs. The protein is Eukaryotic translation initiation factor 3 subunit D of Cryptococcus neoformans var. neoformans serotype D (strain B-3501A) (Filobasidiella neoformans).